The primary structure comprises 176 residues: Nicotinamide-nucleotide adenylyltransferase (176 aa).

The protein belongs to the archaeal NMN adenylyltransferase family.

It is found in the cytoplasm. It catalyses the reaction beta-nicotinamide D-ribonucleotide + ATP + H(+) = diphosphate + NAD(+). The protein operates within cofactor biosynthesis; NAD(+) biosynthesis; NAD(+) from nicotinamide D-ribonucleotide: step 1/1. The protein is Nicotinamide-nucleotide adenylyltransferase of Halorubrum lacusprofundi (strain ATCC 49239 / DSM 5036 / JCM 8891 / ACAM 34).